A 79-amino-acid chain; its full sequence is ATP synthase subunit c (79 aa).

Transmembrane regions (helical) follow at residues 11–31 and 59–79; these read IAVA…IGIL and LVDA…FAVI.

This sequence belongs to the ATPase C chain family. F-type ATPases have 2 components, F(1) - the catalytic core - and F(0) - the membrane proton channel. F(1) has five subunits: alpha(3), beta(3), gamma(1), delta(1), epsilon(1). F(0) has three main subunits: a(1), b(2) and c(10-14). The alpha and beta chains form an alternating ring which encloses part of the gamma chain. F(1) is attached to F(0) by a central stalk formed by the gamma and epsilon chains, while a peripheral stalk is formed by the delta and b chains.

Its subcellular location is the cell membrane. Functionally, f(1)F(0) ATP synthase produces ATP from ADP in the presence of a proton or sodium gradient. F-type ATPases consist of two structural domains, F(1) containing the extramembraneous catalytic core and F(0) containing the membrane proton channel, linked together by a central stalk and a peripheral stalk. During catalysis, ATP synthesis in the catalytic domain of F(1) is coupled via a rotary mechanism of the central stalk subunits to proton translocation. In terms of biological role, key component of the F(0) channel; it plays a direct role in translocation across the membrane. A homomeric c-ring of between 10-14 subunits forms the central stalk rotor element with the F(1) delta and epsilon subunits. This is ATP synthase subunit c from Buchnera aphidicola subsp. Baizongia pistaciae (strain Bp).